Consider the following 400-residue polypeptide: Tryptophan synthase beta chain (400 aa).

K91 is subject to N6-(pyridoxal phosphate)lysine.

Belongs to the TrpB family. As to quaternary structure, tetramer of two alpha and two beta chains. Pyridoxal 5'-phosphate serves as cofactor.

The catalysed reaction is (1S,2R)-1-C-(indol-3-yl)glycerol 3-phosphate + L-serine = D-glyceraldehyde 3-phosphate + L-tryptophan + H2O. It participates in amino-acid biosynthesis; L-tryptophan biosynthesis; L-tryptophan from chorismate: step 5/5. In terms of biological role, the beta subunit is responsible for the synthesis of L-tryptophan from indole and L-serine. In Listeria monocytogenes serotype 4b (strain CLIP80459), this protein is Tryptophan synthase beta chain.